Reading from the N-terminus, the 466-residue chain is MDFNKENINMVDAKKAKKTVVATGIGNAMEWFDFGVYAYTTAYIGANFFSPVENADIRQMLTFAALAIAFLLRPIGGVVFGIIGDKYGRKVVLTSTIILMAFSTLTIGLLPSYDQIGLWAPILLLLARVLQGFSTGGEYAGAMTYVAESSPDKRRNSLGSGLEIGTLSGYIAASIMIAVLTFFLTDEQMASFGWRIPFLLGLFLGLFGLYLRRKLEESPVFENDVATQPERDNINFLQIIRFYYIDIFVCFVAVVFFNVTNYMVTAYLPTYLEQVIKLDATTTSVLITCVMAIMIPLALMFGKLADKIGEKKVFLIGTGGLTLFSIIAFMLLHSQSFVVIVIGIFILGFFLSTYEATMPGSLPTMFYSHIRYRTLSVTFNISVSIFGGTTPLVATWLVTKTGDPLAPAYYLTAISVIGFLVITFLHLSTAGKSLKGSYPNVDNEQDRAYYAEHPKEALWWVKERKN.

12 helical membrane passes run 20-42, 63-83, 91-111, 116-136, 164-184, 191-211, 239-259, 285-305, 313-332, 337-354, 377-397, and 405-425; these read VVAT…YTTA, FAAL…FGII, VVLT…GLLP, IGLW…FSTG, IGTL…TFFL, SFGW…GLYL, IIRF…FFNV, VLIT…GKLA, VFLI…FMLL, FVVI…LSTY, VTFN…ATWL, and LAPA…ITFL.

This sequence belongs to the major facilitator superfamily. Metabolite:H+ Symporter (MHS) family (TC 2.A.1.6) family.

It localises to the cell membrane. Its function is as follows. May be a proton symporter involved in the uptake of osmolytes such as proline and glycine betaine. The polypeptide is Putative proline/betaine transporter (proP) (Staphylococcus aureus (strain MSSA476)).